A 339-amino-acid polypeptide reads, in one-letter code: UDP-3-O-acylglucosamine N-acyltransferase (339 aa).

His-251 (proton acceptor) is an active-site residue.

It belongs to the transferase hexapeptide repeat family. LpxD subfamily. Homotrimer.

The catalysed reaction is a UDP-3-O-[(3R)-3-hydroxyacyl]-alpha-D-glucosamine + a (3R)-hydroxyacyl-[ACP] = a UDP-2-N,3-O-bis[(3R)-3-hydroxyacyl]-alpha-D-glucosamine + holo-[ACP] + H(+). It functions in the pathway bacterial outer membrane biogenesis; LPS lipid A biosynthesis. Its function is as follows. Catalyzes the N-acylation of UDP-3-O-acylglucosamine using 3-hydroxyacyl-ACP as the acyl donor. Is involved in the biosynthesis of lipid A, a phosphorylated glycolipid that anchors the lipopolysaccharide to the outer membrane of the cell. This chain is UDP-3-O-acylglucosamine N-acyltransferase, found in Paramagnetospirillum magneticum (strain ATCC 700264 / AMB-1) (Magnetospirillum magneticum).